The chain runs to 463 residues: MTDTQSPFSFAAALLQCGSPGQTFSMESLLKPELGEYSPSGENGIDGEESTICSVCCDEASGRHYGVVACFGCKGFFRRTVRAGKNYVCRYSKKCRIDKAGRNVCRSCRFQKCLEVGMEPDAIRPDRDKTGRQKNPRRNTEGSIKKVSVGSILGDLPCLNKFKDDSDDAATSPSSRADSAPMDLRPSFIDESVLTTLTEIENIVIQLQDNFETNQQSLPPMGEAITKPSLIAARTLLNFNGAKGVADANCVSSNLRRMIVFTFDYINTLRPIADLHPSEKLVIARSIISPFCILFCGYQSVAIEAPEHDSIYLPSGHKLPASQLLFTKDSDQKKYILLENKADNVRRNMTEMIIQQLRRLNVTKTEMVALKAIMALDHNVKGLSAESCELLVVARESVQNALFSHLIATFGTAEATSRFAHLLLLIASATRVAYSLSSFFQLSRDVNYEIDYVLEELLFLDRI.

A DNA-binding region (nuclear receptor) is located at residues 50 to 125; sequence STICSVCCDE…VGMEPDAIRP (76 aa). 2 consecutive NR C4-type zinc fingers follow at residues 53–73 and 89–113; these read CSVC…CFGC and CRYS…FQKC. The span at 121-131 shows a compositional bias: basic and acidic residues; sequence DAIRPDRDKTG. Residues 121–143 are disordered; sequence DAIRPDRDKTGRQKNPRRNTEGS. The NR LBD domain maps to 199–462; sequence EIENIVIQLQ…VLEELLFLDR (264 aa).

It belongs to the nuclear hormone receptor family.

It is found in the nucleus. Functionally, orphan nuclear receptor. The protein is Nuclear hormone receptor family member nhr-3 (nhr-3) of Caenorhabditis elegans.